The primary structure comprises 429 residues: Ribosomal RNA small subunit methyltransferase B (429 aa).

S-adenosyl-L-methionine-binding positions include Cys254–Lys260, Asp277, Asp303, and Asp322. The active-site Nucleophile is Cys375.

This sequence belongs to the class I-like SAM-binding methyltransferase superfamily. RsmB/NOP family.

The protein resides in the cytoplasm. It carries out the reaction cytidine(967) in 16S rRNA + S-adenosyl-L-methionine = 5-methylcytidine(967) in 16S rRNA + S-adenosyl-L-homocysteine + H(+). Specifically methylates the cytosine at position 967 (m5C967) of 16S rRNA. This Escherichia coli (strain UTI89 / UPEC) protein is Ribosomal RNA small subunit methyltransferase B.